A 239-amino-acid chain; its full sequence is Phosducin-like protein 2 (239 aa).

A coiled-coil region spans residues 26-87; sequence TEDELFDLIK…IQQMKVEAEL (62 aa). One can recognise a Phosducin domain in the interval 36 to 196; that stretch reads EAAEMATEAE…TTVNDIEWQL (161 aa). Basic and acidic residues predominate over residues 42–59; the sequence is TEAEKNEKLENASLKDLK. Disordered regions lie at residues 42 to 64 and 212 to 239; these read TEAE…MEDD and ITLA…DSDD. A thioredoxin fold region spans residues 90–239; the sequence is FGELKEISEP…DESDNSDSDD (150 aa). Residues 214–224 are compositionally biased toward basic residues; it reads LARKKSQKSRY. Acidic residues predominate over residues 230–239; it reads DESDNSDSDD.

The protein belongs to the phosducin family.

This Dictyostelium discoideum (Social amoeba) protein is Phosducin-like protein 2 (phlp2).